The following is a 383-amino-acid chain: L-lactate dehydrogenase (383 aa).

One can recognise an FMN hydroxy acid dehydrogenase domain in the interval 1-380 (MIISSGNDYR…NTDCLVQAIK (380 aa)). Position 24 (Tyr-24) interacts with substrate. FMN is bound by residues Ser-106 and Gln-127. Tyr-129 serves as a coordination point for substrate. Thr-155 provides a ligand contact to FMN. Residue Arg-164 coordinates substrate. Lys-251 provides a ligand contact to FMN. The active-site Proton acceptor is the His-275. A substrate-binding site is contributed by Arg-278. Position 306–330 (306–330 (DSGIRNGLDVVRMLALGADTVLLGR)) interacts with FMN.

It belongs to the FMN-dependent alpha-hydroxy acid dehydrogenase family. The cofactor is FMN.

The protein resides in the cell inner membrane. It carries out the reaction (S)-lactate + A = pyruvate + AH2. Functionally, catalyzes the conversion of L-lactate to pyruvate. Is coupled to the respiratory chain. The polypeptide is L-lactate dehydrogenase (Acinetobacter baumannii (strain SDF)).